Reading from the N-terminus, the 136-residue chain is D-ribose pyranase (136 aa).

The active-site Proton donor is His-20. Residues Asp-28, His-98, and 120–122 (YAN) each bind substrate.

This sequence belongs to the RbsD / FucU family. RbsD subfamily. As to quaternary structure, homodecamer.

It localises to the cytoplasm. It catalyses the reaction beta-D-ribopyranose = beta-D-ribofuranose. Its pathway is carbohydrate metabolism; D-ribose degradation; D-ribose 5-phosphate from beta-D-ribopyranose: step 1/2. Its function is as follows. Catalyzes the interconversion of beta-pyran and beta-furan forms of D-ribose. This chain is D-ribose pyranase, found in Geobacillus kaustophilus (strain HTA426).